The primary structure comprises 341 residues: Methionine import ATP-binding protein MetN 3 (341 aa).

Positions 2 to 241 (ILLENVKKIY…PQQDITKRFV (240 aa)) constitute an ABC transporter domain. 38-45 (GYSGAGKS) is an ATP binding site.

It belongs to the ABC transporter superfamily. Methionine importer (TC 3.A.1.24) family. The complex is composed of two ATP-binding proteins (MetN), two transmembrane proteins (MetI) and a solute-binding protein (MetQ).

The protein localises to the cell membrane. The enzyme catalyses L-methionine(out) + ATP + H2O = L-methionine(in) + ADP + phosphate + H(+). It catalyses the reaction D-methionine(out) + ATP + H2O = D-methionine(in) + ADP + phosphate + H(+). Its function is as follows. Part of the ABC transporter complex MetNIQ involved in methionine import. Responsible for energy coupling to the transport system. This chain is Methionine import ATP-binding protein MetN 3, found in Bacillus cereus (strain ATCC 10987 / NRS 248).